Reading from the N-terminus, the 672-residue chain is Negative growth regulatory protein NGR1 (672 aa).

M1 carries the N-acetylmethionine modification. Polar residues-rich tracts occupy residues 1–13 (MMSN…QRQE) and 23–32 (SSTVETSTEP). Disordered stretches follow at residues 1 to 40 (MMSN…WMGD) and 77 to 102 (SSTS…NSTD). N-acetylserine is present on M2. RRM domains are found at residues 36–159 (LWMG…YSPT), 192–271 (FSLF…YATP), and 360–432 (TTVF…WGRP). Positions 77-96 (SSTSSSNNNTSEENAENQQS) are enriched in low complexity. S524 carries the phosphoserine modification. The interval 640–672 (LNIAPNSNNSKSSIMNKHPNRNNVPPIHPSLLH) is disordered. Residues 645-656 (NSNNSKSSIMNK) show a composition bias toward low complexity.

In terms of biological role, may be an RNA-binding protein involved in control of an RNA processing pathway that influences the regulation of cell growth in early log phase. Can bind to RNA and single-stranded DNA but not double-stranded DNA. The chain is Negative growth regulatory protein NGR1 (NGR1) from Saccharomyces cerevisiae (strain ATCC 204508 / S288c) (Baker's yeast).